Here is a 201-residue protein sequence, read N- to C-terminus: Osmotically-inducible protein Y (201 aa).

The first 28 residues, 1 to 28, serve as a signal peptide directing secretion; sequence MTMTRLKISKTLLAVMLTSAVATGSAYA. 2 BON domains span residues 55–123 and 134–201; these read DDSA…HVRD and GDTA…LKTK.

Its subcellular location is the periplasm. The polypeptide is Osmotically-inducible protein Y (osmY) (Escherichia coli (strain K12)).